Reading from the N-terminus, the 409-residue chain is Autotransproter heptosyltransferase BAHTCr (409 aa).

The ADP-D-glycero-beta-D-manno-heptose site is built by Thr-107, Leu-108, and Gly-109. Asp-110 (proton acceptor) is an active-site residue. Positions 224, 226, 230, 257, 302, and 326 each coordinate ADP-D-glycero-beta-D-manno-heptose. Residues Cys-339, Cys-342, Cys-358, and Cys-370 each coordinate Fe(3+).

This sequence belongs to the glycosyltransferase 9 family. In terms of assembly, homododecamer composed of 6 homodimers forming a ring. Fe(3+) is required as a cofactor.

Its subcellular location is the cytoplasm. The catalysed reaction is ADP-D-glycero-beta-D-manno-heptose + L-seryl-[protein] = O-(D-glycero-alpha-D-manno-heptosyl)-L-seryl-[protein] + ADP + H(+). It catalyses the reaction ADP-L-glycero-beta-D-manno-heptose + L-seryl-[protein] = O-(L-glycero-alpha-D-manno-heptosyl)-L-seryl-[protein] + ADP + H(+). Glycosylates autotransporter CARC. By glycosylating CARC, involved in the colonization of the mouse host gastrointestinal tract. The polypeptide is Autotransproter heptosyltransferase BAHTCr (Citrobacter rodentium (strain ICC168) (Citrobacter freundii biotype 4280)).